The chain runs to 530 residues: Berberine bridge enzyme-like 4 (530 aa).

The first 19 residues, 1–19 (MKGTLSVLCLVLLVSVLEA), serve as a signal peptide directing secretion. Cysteine 32 and cysteine 95 are joined by a disulfide. N-linked (GlcNAc...) asparagine glycosylation is present at asparagine 52. The FAD-binding PCMH-type domain maps to 73–247 (NYRKLLAIVA…LSWKINLVDV (175 aa)). Residues 110 to 172 (HDYEGLSYMS…QTLAFPAGVC (63 aa)) constitute a cross-link (6-(S-cysteinyl)-8alpha-(pros-histidyl)-FAD (His-Cys)). N-linked (GlcNAc...) asparagine glycans are attached at residues asparagine 257, asparagine 292, asparagine 341, and asparagine 441.

It belongs to the oxygen-dependent FAD-linked oxidoreductase family. Requires FAD as cofactor. The FAD cofactor is bound via a bicovalent 6-S-cysteinyl, 8alpha-N1-histidyl FAD linkage.

It localises to the secreted. It is found in the cell wall. Probable flavin-dependent oxidoreductase. This chain is Berberine bridge enzyme-like 4, found in Arabidopsis thaliana (Mouse-ear cress).